The chain runs to 181 residues: Large ribosomal subunit protein uL5 (181 aa).

The protein belongs to the universal ribosomal protein uL5 family. As to quaternary structure, part of the 50S ribosomal subunit; part of the 5S rRNA/L5/L18/L25 subcomplex. Contacts the 5S rRNA and the P site tRNA. Forms a bridge to the 30S subunit in the 70S ribosome.

Its function is as follows. This is one of the proteins that bind and probably mediate the attachment of the 5S RNA into the large ribosomal subunit, where it forms part of the central protuberance. In the 70S ribosome it contacts protein S13 of the 30S subunit (bridge B1b), connecting the 2 subunits; this bridge is implicated in subunit movement. Contacts the P site tRNA; the 5S rRNA and some of its associated proteins might help stabilize positioning of ribosome-bound tRNAs. The sequence is that of Large ribosomal subunit protein uL5 from Mesomycoplasma hyopneumoniae (strain 7448) (Mycoplasma hyopneumoniae).